A 124-amino-acid polypeptide reads, in one-letter code: Suppressor of RNA silencing (124 aa).

Residues 1 to 14 (MPKSEFFREERKRR) form a basic motif (BM) region. A C-2 region spans residues 30–68 (CGYSCGMPPAVEKVSVPADTEEDVYMLIFPYEQFCGEKH). Positions 72–124 (YESLKDVSDDELKLRRLERQRETLLASFQQKLKRYDEKIALLSEKFKNLRSKL) form a coiled coil. A Phosphoserine modification is found at Ser79.

Belongs to the virgaviridae suppressor of RNA silencing family. Homooligomer. Post-translationally, phosphorylated at Ser-79 by a host PKA-like kinase; the phosphorylation at this site seems to suppress host cell death.

Its subcellular location is the host chloroplast envelope. The protein resides in the host endoplasmic reticulum. It is found in the host cell junction. It localises to the host plasmodesma. Functionally, suppressor of RNA-mediated gene silencing, also known as post-transcriptional gene silencing (PTGS), a mechanism of plant viral defense that limits the accumulation of viral RNAs. Promotes viral cell-to-cell long distance movement. This Peanut clump virus (isolate 87/TGTA2) (PCV) protein is Suppressor of RNA silencing.